The chain runs to 317 residues: Sulfate adenylyltransferase subunit 2 (317 aa).

2 disordered regions span residues 1 to 22 (MPDS…PLDP) and 298 to 317 (RAID…EGYF).

The protein belongs to the PAPS reductase family. CysD subfamily. As to quaternary structure, heterodimer composed of CysD, the smaller subunit, and CysN.

It catalyses the reaction sulfate + ATP + H(+) = adenosine 5'-phosphosulfate + diphosphate. It participates in sulfur metabolism; hydrogen sulfide biosynthesis; sulfite from sulfate: step 1/3. Its function is as follows. With CysN forms the ATP sulfurylase (ATPS) that catalyzes the adenylation of sulfate producing adenosine 5'-phosphosulfate (APS) and diphosphate, the first enzymatic step in sulfur assimilation pathway. APS synthesis involves the formation of a high-energy phosphoric-sulfuric acid anhydride bond driven by GTP hydrolysis by CysN coupled to ATP hydrolysis by CysD. The polypeptide is Sulfate adenylyltransferase subunit 2 (cysD) (Rhizobium tropici).